The sequence spans 133 residues: Putative pre-16S rRNA nuclease (133 aa).

The protein belongs to the YqgF nuclease family.

It localises to the cytoplasm. Its function is as follows. Could be a nuclease involved in processing of the 5'-end of pre-16S rRNA. The sequence is that of Putative pre-16S rRNA nuclease from Alcanivorax borkumensis (strain ATCC 700651 / DSM 11573 / NCIMB 13689 / SK2).